A 310-amino-acid chain; its full sequence is Ribosome production factor 2 homolog (310 aa).

A Brix domain is found at 29 to 239 (KKTLILHGTK…VRRHRYPVES (211 aa)). Positions 281 to 310 (LSNDVKGLKRERREAKKNKDHSKKQKINPE) are disordered. Residues 295–310 (AKKNKDHSKKQKINPE) are compositionally biased toward basic residues.

This sequence belongs to the RPF2 family.

It is found in the nucleus. The protein localises to the nucleolus. This Oryza sativa subsp. japonica (Rice) protein is Ribosome production factor 2 homolog.